A 706-amino-acid polypeptide reads, in one-letter code: G2/M phase-specific E3 ubiquitin-protein ligase (706 aa).

The C2HC pre-PHD-type zinc finger occupies 11-51; the sequence is NLACVFCRKHDDCPNKYGEKKTKEKWNLTVHYYCLLMSSGI. The PHD-type 1 zinc finger occupies 79–128; sequence LKCCVCKKNGASIGCVAPRCKRSYHFPCGLQRECIFQFTGNFASFCWDHR. The PHD-type 2; degenerate zinc finger occupies 143–193; the sequence is PCTICLEFIEPIPSYNILRSPCCKNAWFHRDCLQVQAINAGVFFFRCTICN. The segment at 237 to 286 adopts a PHD-type 3 zinc-finger fold; it reads RCRCKEGRDYNAPDSKWEIKRCQCCGSSGTHLACSSLRSWEQNWECLECR. The region spanning 371-698 is the HECT domain; that stretch reads IWNSALDAFR…IRNTLRLEKE (328 aa).

Predominantly expressed in brain, liver, kidney, testes and ovary.

It is found in the nucleus. It localises to the nucleolus. Its subcellular location is the cytoplasm. It carries out the reaction S-ubiquitinyl-[E2 ubiquitin-conjugating enzyme]-L-cysteine + [acceptor protein]-L-lysine = [E2 ubiquitin-conjugating enzyme]-L-cysteine + N(6)-ubiquitinyl-[acceptor protein]-L-lysine.. It functions in the pathway protein modification; protein ubiquitination. Its function is as follows. E3 ubiquitin-protein ligase which accepts ubiquitin from an E2 ubiquitin-conjugating enzyme in the form of a thioester and then directly transfers the ubiquitin to targeted substrates. Essential in early embryonic development to prevent apoptotic death. The chain is G2/M phase-specific E3 ubiquitin-protein ligase (G2E3) from Homo sapiens (Human).